Consider the following 322-residue polypeptide: 4-hydroxy-3-methylbut-2-enyl diphosphate reductase (322 aa).

C12 lines the [4Fe-4S] cluster pocket. Residues H43 and H81 each contribute to the (2E)-4-hydroxy-3-methylbut-2-enyl diphosphate site. H43 and H81 together coordinate dimethylallyl diphosphate. Residues H43 and H81 each contribute to the isopentenyl diphosphate site. C103 contributes to the [4Fe-4S] cluster binding site. H131 is a binding site for (2E)-4-hydroxy-3-methylbut-2-enyl diphosphate. H131 contacts dimethylallyl diphosphate. An isopentenyl diphosphate-binding site is contributed by H131. Residue E133 is the Proton donor of the active site. T172 provides a ligand contact to (2E)-4-hydroxy-3-methylbut-2-enyl diphosphate. A [4Fe-4S] cluster-binding site is contributed by C200. Residues S228, N230, and S273 each coordinate (2E)-4-hydroxy-3-methylbut-2-enyl diphosphate. 3 residues coordinate dimethylallyl diphosphate: S228, N230, and S273. Isopentenyl diphosphate is bound by residues S228, N230, and S273.

Belongs to the IspH family. Requires [4Fe-4S] cluster as cofactor.

It catalyses the reaction isopentenyl diphosphate + 2 oxidized [2Fe-2S]-[ferredoxin] + H2O = (2E)-4-hydroxy-3-methylbut-2-enyl diphosphate + 2 reduced [2Fe-2S]-[ferredoxin] + 2 H(+). The enzyme catalyses dimethylallyl diphosphate + 2 oxidized [2Fe-2S]-[ferredoxin] + H2O = (2E)-4-hydroxy-3-methylbut-2-enyl diphosphate + 2 reduced [2Fe-2S]-[ferredoxin] + 2 H(+). It functions in the pathway isoprenoid biosynthesis; dimethylallyl diphosphate biosynthesis; dimethylallyl diphosphate from (2E)-4-hydroxy-3-methylbutenyl diphosphate: step 1/1. The protein operates within isoprenoid biosynthesis; isopentenyl diphosphate biosynthesis via DXP pathway; isopentenyl diphosphate from 1-deoxy-D-xylulose 5-phosphate: step 6/6. Its function is as follows. Catalyzes the conversion of 1-hydroxy-2-methyl-2-(E)-butenyl 4-diphosphate (HMBPP) into a mixture of isopentenyl diphosphate (IPP) and dimethylallyl diphosphate (DMAPP). Acts in the terminal step of the DOXP/MEP pathway for isoprenoid precursor biosynthesis. The chain is 4-hydroxy-3-methylbut-2-enyl diphosphate reductase from Macrococcus caseolyticus (strain JCSC5402) (Macrococcoides caseolyticum).